A 548-amino-acid polypeptide reads, in one-letter code: Protoporphyrinogen oxidase, chloroplastic (548 aa).

A chloroplast-targeting transit peptide spans 1–50 (MTTTPIANHPNIFTHQSSSSPLAFLNRTSFIPFSSISKRNSVNCNGWRTR). FAD contacts are provided by residues 78-83 (GAGISG), 101-102 (EA), and 123-126 (GPNS). The span at 265 to 279 (KERSSTPKAPRDPRL) shows a compositional bias: basic and acidic residues. Residues 265-287 (KERSSTPKAPRDPRLPKPKGQTV) form a disordered region. Residue 522-524 (VAL) participates in FAD binding.

It belongs to the protoporphyrinogen/coproporphyrinogen oxidase family. Protoporphyrinogen oxidase subfamily. In terms of assembly, homodimer. The cofactor is FAD.

The protein localises to the plastid. It is found in the chloroplast. It catalyses the reaction protoporphyrinogen IX + 3 O2 = protoporphyrin IX + 3 H2O2. It functions in the pathway porphyrin-containing compound metabolism; protoporphyrin-IX biosynthesis; protoporphyrin-IX from protoporphyrinogen-IX: step 1/1. It participates in porphyrin-containing compound metabolism; chlorophyll biosynthesis. In terms of biological role, catalyzes the 6-electron oxidation of protoporphyrinogen-IX to form protoporphyrin-IX. The chain is Protoporphyrinogen oxidase, chloroplastic (PPXI) from Nicotiana tabacum (Common tobacco).